Here is a 467-residue protein sequence, read N- to C-terminus: UDP-N-acetylmuramoylalanine--D-glutamate ligase (467 aa).

115–121 (GTDGKTT) provides a ligand contact to ATP.

It belongs to the MurCDEF family.

The protein localises to the cytoplasm. The catalysed reaction is UDP-N-acetyl-alpha-D-muramoyl-L-alanine + D-glutamate + ATP = UDP-N-acetyl-alpha-D-muramoyl-L-alanyl-D-glutamate + ADP + phosphate + H(+). Its pathway is cell wall biogenesis; peptidoglycan biosynthesis. Cell wall formation. Catalyzes the addition of glutamate to the nucleotide precursor UDP-N-acetylmuramoyl-L-alanine (UMA). The polypeptide is UDP-N-acetylmuramoylalanine--D-glutamate ligase (Chlorobaculum parvum (strain DSM 263 / NCIMB 8327) (Chlorobium vibrioforme subsp. thiosulfatophilum)).